Reading from the N-terminus, the 220-residue chain is Kinetochore protein Spc25 (220 aa).

Residues His79–Glu114 adopt a coiled-coil conformation.

Belongs to the SPC25 family. As to quaternary structure, component of the Ndc80 complex, which is composed of Ndc80, Nuf2 and Spc25.

It is found in the nucleus. Its subcellular location is the chromosome. It localises to the centromere. The protein resides in the kinetochore. Its function is as follows. Acts as a component of the essential kinetochore-associated Ndc80 complex, which is required for chromosome segregation and spindle checkpoint activity during meiosis and mitosis. Required for kinetochore integrity and the organization of stable microtubule binding sites in the outer plate of the kinetochore. Participates in SAC signaling that responds specifically to disruptions in spindle microtubule dynamics. The NDC80 complex synergistically enhances the affinity of the SKA1 complex for microtubules and may allow the NDC80 complex to track depolymerizing microtubules. This is Kinetochore protein Spc25 from Drosophila orena (Fruit fly).